The chain runs to 223 residues: Pyridoxal phosphate homeostasis protein (223 aa).

N6-(pyridoxal phosphate)lysine is present on Lys36.

It belongs to the pyridoxal phosphate-binding protein YggS/PROSC family. As to quaternary structure, monomer.

In terms of biological role, pyridoxal 5'-phosphate (PLP)-binding protein, which is involved in PLP homeostasis. The protein is Pyridoxal phosphate homeostasis protein of Buchnera aphidicola subsp. Baizongia pistaciae (strain Bp).